The following is a 179-amino-acid chain: Shikimate kinase (179 aa).

14-19 (GAGKTT) serves as a coordination point for ATP. Threonine 18 contacts Mg(2+). Positions 36, 60, and 82 each coordinate substrate. Residue arginine 120 coordinates ATP. Position 139 (arginine 139) interacts with substrate.

It belongs to the shikimate kinase family. In terms of assembly, monomer. Requires Mg(2+) as cofactor.

Its subcellular location is the cytoplasm. The enzyme catalyses shikimate + ATP = 3-phosphoshikimate + ADP + H(+). Its pathway is metabolic intermediate biosynthesis; chorismate biosynthesis; chorismate from D-erythrose 4-phosphate and phosphoenolpyruvate: step 5/7. Catalyzes the specific phosphorylation of the 3-hydroxyl group of shikimic acid using ATP as a cosubstrate. The protein is Shikimate kinase of Methylococcus capsulatus (strain ATCC 33009 / NCIMB 11132 / Bath).